A 330-amino-acid chain; its full sequence is Pyridoxal 5'-phosphate synthase subunit PdxS (330 aa).

Aspartate 23 is a binding site for D-ribose 5-phosphate. Lysine 80 serves as the catalytic Schiff-base intermediate with D-ribose 5-phosphate. Position 152 (glycine 152) interacts with D-ribose 5-phosphate. Arginine 164 is a D-glyceraldehyde 3-phosphate binding site. D-ribose 5-phosphate contacts are provided by residues glycine 250 and 271 to 272 (GS).

Belongs to the PdxS/SNZ family. As to quaternary structure, in the presence of PdxT, forms a dodecamer of heterodimers.

The catalysed reaction is aldehydo-D-ribose 5-phosphate + D-glyceraldehyde 3-phosphate + L-glutamine = pyridoxal 5'-phosphate + L-glutamate + phosphate + 3 H2O + H(+). Its pathway is cofactor biosynthesis; pyridoxal 5'-phosphate biosynthesis. Catalyzes the formation of pyridoxal 5'-phosphate from ribose 5-phosphate (RBP), glyceraldehyde 3-phosphate (G3P) and ammonia. The ammonia is provided by the PdxT subunit. Can also use ribulose 5-phosphate and dihydroxyacetone phosphate as substrates, resulting from enzyme-catalyzed isomerization of RBP and G3P, respectively. The protein is Pyridoxal 5'-phosphate synthase subunit PdxS of Methanocaldococcus jannaschii (strain ATCC 43067 / DSM 2661 / JAL-1 / JCM 10045 / NBRC 100440) (Methanococcus jannaschii).